Consider the following 23-residue polypeptide: Potassium channel toxin alpha-KTx 13.3 (23 aa).

Disulfide bonds link Cys2–Cys15, Cys5–Cys20, and Cys9–Cys22. The interaction with Ca(2+)-activated K(+) channels stretch occupies residues 13 to 20 (GKCINGRC). A Tyrosine amide modification is found at Tyr23.

As to expression, expressed by the venom gland.

It is found in the secreted. Its function is as follows. Reversibly blocks Shaker B potassium channels, with a dissociation constant of 200 nM. This is Potassium channel toxin alpha-KTx 13.3 from Tityus pachyurus (Colombian scorpion).